A 181-amino-acid chain; its full sequence is Isopentenyl-diphosphate Delta-isomerase (181 aa).

Residues histidine 24 and histidine 30 each coordinate Mn(2+). Residues 28–168 (LLHLAFSVLL…PDTFSVWFPT (141 aa)) form the Nudix hydrolase domain. Residue cysteine 68 is part of the active site. Histidine 70 contacts Mn(2+). Glutamate 88 is a Mg(2+) binding site. Mn(2+) is bound by residues glutamate 117 and glutamate 119. Glutamate 119 is a catalytic residue.

Belongs to the IPP isomerase type 1 family. Requires Mg(2+) as cofactor. It depends on Mn(2+) as a cofactor.

It localises to the cytoplasm. It catalyses the reaction isopentenyl diphosphate = dimethylallyl diphosphate. The protein operates within isoprenoid biosynthesis; dimethylallyl diphosphate biosynthesis; dimethylallyl diphosphate from isopentenyl diphosphate: step 1/1. Functionally, catalyzes the 1,3-allylic rearrangement of the homoallylic substrate isopentenyl (IPP) to its highly electrophilic allylic isomer, dimethylallyl diphosphate (DMAPP). This Aliivibrio fischeri (strain MJ11) (Vibrio fischeri) protein is Isopentenyl-diphosphate Delta-isomerase.